A 316-amino-acid chain; its full sequence is Aspartate carbamoyltransferase catalytic subunit (316 aa).

2 residues coordinate carbamoyl phosphate: R66 and T67. K94 contacts L-aspartate. R116, H146, and Q149 together coordinate carbamoyl phosphate. Positions 180 and 235 each coordinate L-aspartate. Residues G276 and P277 each coordinate carbamoyl phosphate.

The protein belongs to the aspartate/ornithine carbamoyltransferase superfamily. ATCase family. In terms of assembly, heterododecamer (2C3:3R2) of six catalytic PyrB chains organized as two trimers (C3), and six regulatory PyrI chains organized as three dimers (R2).

The catalysed reaction is carbamoyl phosphate + L-aspartate = N-carbamoyl-L-aspartate + phosphate + H(+). Its pathway is pyrimidine metabolism; UMP biosynthesis via de novo pathway; (S)-dihydroorotate from bicarbonate: step 2/3. Its function is as follows. Catalyzes the condensation of carbamoyl phosphate and aspartate to form carbamoyl aspartate and inorganic phosphate, the committed step in the de novo pyrimidine nucleotide biosynthesis pathway. The chain is Aspartate carbamoyltransferase catalytic subunit from Stenotrophomonas maltophilia (strain R551-3).